The primary structure comprises 421 residues: Gamma-glutamyl phosphate reductase (421 aa).

The protein belongs to the gamma-glutamyl phosphate reductase family.

The protein resides in the cytoplasm. The catalysed reaction is L-glutamate 5-semialdehyde + phosphate + NADP(+) = L-glutamyl 5-phosphate + NADPH + H(+). The protein operates within amino-acid biosynthesis; L-proline biosynthesis; L-glutamate 5-semialdehyde from L-glutamate: step 2/2. Its function is as follows. Catalyzes the NADPH-dependent reduction of L-glutamate 5-phosphate into L-glutamate 5-semialdehyde and phosphate. The product spontaneously undergoes cyclization to form 1-pyrroline-5-carboxylate. This chain is Gamma-glutamyl phosphate reductase, found in Acinetobacter baumannii (strain SDF).